Here is a 186-residue protein sequence, read N- to C-terminus: UPF0301 protein Swit_2673 (186 aa).

Belongs to the UPF0301 (AlgH) family.

This chain is UPF0301 protein Swit_2673, found in Rhizorhabdus wittichii (strain DSM 6014 / CCUG 31198 / JCM 15750 / NBRC 105917 / EY 4224 / RW1) (Sphingomonas wittichii).